The sequence spans 150 residues: Monothiol glutaredoxin-5, mitochondrial (150 aa).

A mitochondrion-targeting transit peptide spans Met-1 to Tyr-29. Residues Arg-35–Val-140 form the Glutaredoxin domain. Lys-52 contributes to the glutathione binding site. Cys-60 serves as a coordination point for [2Fe-2S] cluster. Glutathione contacts are provided by residues Arg-92 to Lys-96, Ile-104, and Cys-117 to Asp-118.

The protein belongs to the glutaredoxin family. Monothiol subfamily. In terms of assembly, homodimer. Interacts with SSQ1. Interacts with BOL1.

It is found in the mitochondrion matrix. Functionally, monothiol glutaredoxin involved in mitochondrial iron-sulfur (Fe/S) cluster transfer. Receives 2Fe/2S clusters from scaffold protein ISU1 and mediates their transfer to apoproteins, to the 4Fe/FS cluster biosynthesis machinery, or export from mitochondrion. In Saccharomyces cerevisiae (strain ATCC 204508 / S288c) (Baker's yeast), this protein is Monothiol glutaredoxin-5, mitochondrial.